The following is a 209-amino-acid chain: Small ribosomal subunit protein uS4 (209 aa).

The S4 RNA-binding domain maps to 99–160; the sequence is ARLDSVAYRM…RARASLRCKA (62 aa).

The protein belongs to the universal ribosomal protein uS4 family. As to quaternary structure, part of the 30S ribosomal subunit. Contacts protein S5. The interaction surface between S4 and S5 is involved in control of translational fidelity.

Functionally, one of the primary rRNA binding proteins, it binds directly to 16S rRNA where it nucleates assembly of the body of the 30S subunit. With S5 and S12 plays an important role in translational accuracy. The polypeptide is Small ribosomal subunit protein uS4 (Dechloromonas aromatica (strain RCB)).